Here is a 127-residue protein sequence, read N- to C-terminus: Small ribosomal subunit protein uS11 (127 aa).

This sequence belongs to the universal ribosomal protein uS11 family. In terms of assembly, part of the 30S ribosomal subunit. Interacts with proteins S7 and S18. Binds to IF-3.

Functionally, located on the platform of the 30S subunit, it bridges several disparate RNA helices of the 16S rRNA. Forms part of the Shine-Dalgarno cleft in the 70S ribosome. This chain is Small ribosomal subunit protein uS11, found in Nitrosococcus oceani (strain ATCC 19707 / BCRC 17464 / JCM 30415 / NCIMB 11848 / C-107).